We begin with the raw amino-acid sequence, 524 residues long: 2-isopropylmalate synthase (524 aa).

The 263-residue stretch at 12-274 folds into the Pyruvate carboxyltransferase domain; the sequence is VIIFDTTLRD…WNRIESKMLT (263 aa). Residues Asp-21, His-209, His-211, and Asn-245 each coordinate Mn(2+). The interval 398-524 is regulatory domain; that stretch reads RLKSLTVIAG…QDAPAVAVAG (127 aa).

The protein belongs to the alpha-IPM synthase/homocitrate synthase family. LeuA type 1 subfamily. In terms of assembly, homodimer. The cofactor is Mn(2+).

The protein localises to the cytoplasm. The catalysed reaction is 3-methyl-2-oxobutanoate + acetyl-CoA + H2O = (2S)-2-isopropylmalate + CoA + H(+). The protein operates within amino-acid biosynthesis; L-leucine biosynthesis; L-leucine from 3-methyl-2-oxobutanoate: step 1/4. Catalyzes the condensation of the acetyl group of acetyl-CoA with 3-methyl-2-oxobutanoate (2-ketoisovalerate) to form 3-carboxy-3-hydroxy-4-methylpentanoate (2-isopropylmalate). The sequence is that of 2-isopropylmalate synthase from Rhodopseudomonas palustris (strain BisB5).